We begin with the raw amino-acid sequence, 538 residues long: Prickle planar cell polarity protein 3-A (538 aa).

One can recognise a PET domain in the interval 66–175; the sequence is SGSQRDSLCE…CVRPVSGTMS (110 aa). 3 consecutive LIM zinc-binding domains span residues 177-241, 242-302, and 305-366; these read TVCQ…ELKR, PRCL…LYAQ, and DSCG…NATP. A compositionally biased stretch (polar residues) spans 369–378; sequence SFSPSQTDLS. Disordered stretches follow at residues 369–398, 433–463, and 475–538; these read SFSP…DGDS, RGAP…TRVT, and SVSL…CLLS. Positions 435 to 449 are enriched in basic and acidic residues; sequence APKEFSRECPNRRSL. Residues 451 to 463 are compositionally biased toward polar residues; sequence DLNSHTRTPTRVT. Low complexity-rich tracts occupy residues 475–488 and 514–523; these read SVSL…SSSS and APPTHAPTST.

It belongs to the prickle / espinas / testin family. In terms of assembly, interacts with vangl2 via its C-terminus. The vangl2-dependent membrane recruitment of prickle3 is a prerequisite for its polarization. Interacts with wtip. Wtip is involved in the recruitment of prickle3 to the basal body. Predominantly expressed in the epidermal ectoderm.

It localises to the cytoplasm. The protein localises to the cell membrane. It is found in the mitochondrion. Functionally, involved in the planar cell polarity (PCP) pathway that is essential for the polarization of epithelial cells during morphogenetic processes, including gastrulation and neurulation. PCP is maintained by two molecular modules, the global and the core modules. Proteins of the core module include the proteins Frizzled (Fz), Disheveled (Dsh), Van Gogh (Vang), Prickle (Pk), Flamingo (Fmi, Celsr) and Diego (Dgo). The core module proteins develop subcellular asymmetry, accumulating in two groups on opposite sides of epithelial cells. Distinct proximal (Vang, Pk and Fmi) and distal (Fz, Dsh, Dgo and Fmi) complexes segregate to opposite sides of the cell, where they interact with the opposite complex in the neighboring cell at or near the adherents junctions. Directional information to orient polarization with respect to the tissue axes is provided by the global module which involves Wnt proteins. Involved in the organization of the basal body. Involved in cilia growth and positioning. Required for proper assembly, stability, and function of mitochondrial membrane ATP synthase (mitochondrial complex V). The sequence is that of Prickle planar cell polarity protein 3-A (prickle3-a) from Xenopus laevis (African clawed frog).